A 299-amino-acid chain; its full sequence is MEELSGPSSDTLATVESSSNEPDKEVASPDVAATATLSSVEEPGPNPTATPPVWDRGGPLQQVACPVPDSCQTSSTTRGVGTNEDLRLPRRRPPPGKQIPCSSPGCSLSFPSVRDLAQHLRTHCPPTQSLEGKLFRCSALSCTESFPSMQELVAHGKLHYKPNRYFKCENCLLRFRTHRSLFKHLHVCIDHGQNPAPPPPPALDKEPPVPERPPESDPSSSLGLPFPLLEPFTSAPTGPFLPYLNPAPFGLSPPRLRPFLAATPGPPTSSTAIWKKSQGATSSPRRPQGGSDAPSGACR.

2 stretches are compositionally biased toward polar residues: residues 1–20 and 70–80; these read MEEL…SSSN and SCQTSSTTRGV. The interval 1–102 is disordered; the sequence is MEELSGPSSD…PPPGKQIPCS (102 aa). 2 C2H2-type zinc fingers span residues 99-123 and 135-159; these read IPCS…LRTH and FRCS…GKLH. A C2H2-type 3; degenerate zinc finger spans residues 166–190; it reads FKCENCLLRFRTHRSLFKHLHVCID. Disordered regions lie at residues 193–228 and 254–299; these read QNPA…PFPL and PRLR…GACR. Residues 203–215 show a composition bias toward basic and acidic residues; the sequence is LDKEPPVPERPPE. Low complexity predominate over residues 217 to 228; sequence DPSSSLGLPFPL. A compositionally biased stretch (polar residues) spans 268 to 285; sequence TSSTAIWKKSQGATSSPR.

This sequence belongs to the krueppel C2H2-type zinc-finger protein family.

It localises to the nucleus. May be involved in transcriptional regulation. In Rattus norvegicus (Rat), this protein is Zinc finger protein 414 (Znf414).